Here is a 343-residue protein sequence, read N- to C-terminus: Ribosomal RNA small subunit methyltransferase, chloroplastic (343 aa).

A chloroplast-targeting transit peptide spans 1–48; it reads MMNAVITSATINCNSLSPSWTCGDNSPSKLLLGEISAALSRRRTVKVS. Residues histidine 78, methionine 80, glycine 105, glutamate 126, aspartate 151, and asparagine 183 each contribute to the S-adenosyl-L-methionine site.

This sequence belongs to the class I-like SAM-binding methyltransferase superfamily. rRNA adenine N(6)-methyltransferase family.

Its subcellular location is the plastid. It is found in the chloroplast. Required for methylation of the 3' adenosines in the small subunit of plastid rRNA. Essential for chloroplast biogenesis at low temperatures. This is Ribosomal RNA small subunit methyltransferase, chloroplastic from Arabidopsis thaliana (Mouse-ear cress).